The primary structure comprises 557 residues: MTMLKDPSKKYRAFPTIDLPDRTWPSKTITEAPIWCSSDLRDGNQSLIEPMDSEKKLRFWKTLVQVGVKEIEASFPSASQTDFDFVRTLIQDGHIPDDTTIQVLTQAREDLIARTFESLRGAKKAIVHLYNATSPSFRRIVFNQDKQGVKDIAVNAAKLFVKYAAQQPETHWTFQYSPETFSATEMEFAKEVCDAVIEVWNPTPEHKIILNLPATVEVSTPNIYADQIEWFCRNVSRRDSVIISLHCHNDRGTGIAATELGLMAGADRAEGCLFGNGERTGNVDLVTLALNLYTQGIDPQLDFSDIDGVRKVVEECNQLPVHPRHPYVGDLVHTAFSGSHQDAIRKGFAKQQEGERWEVPYLPIDPADIGRSYEAVIRVNSQSGKGGITYLLEQEYGISLPRRMQIEFSQVVQGETDRLGLEMTAQQIYSLLHKEYLQANAPYALVSHRLQEENGHSAVEVEVAGEGETTLHWRGKGNGALEALVAGLPIAVEIMDYNEHAIGAGTNAKAAAYIELRVAGGRPVHGVGIDENITTASFKALFSALNRSLSQQEAKAA.

The region spanning 33-307 (PIWCSSDLRD…DPQLDFSDID (275 aa)) is the Pyruvate carboxyltransferase domain. D42, H246, H248, and N282 together coordinate Mg(2+). Residues 439–557 (ANAPYALVSH…SLSQQEAKAA (119 aa)) are regulatory domain.

The protein belongs to the alpha-IPM synthase/homocitrate synthase family. LeuA type 2 subfamily. Homodimer. It depends on Mg(2+) as a cofactor.

It localises to the cytoplasm. The catalysed reaction is 3-methyl-2-oxobutanoate + acetyl-CoA + H2O = (2S)-2-isopropylmalate + CoA + H(+). Its pathway is amino-acid biosynthesis; L-leucine biosynthesis; L-leucine from 3-methyl-2-oxobutanoate: step 1/4. Its function is as follows. Catalyzes the condensation of the acetyl group of acetyl-CoA with 3-methyl-2-oxobutanoate (2-ketoisovalerate) to form 3-carboxy-3-hydroxy-4-methylpentanoate (2-isopropylmalate). In Pseudomonas putida (strain GB-1), this protein is 2-isopropylmalate synthase.